Consider the following 475-residue polypeptide: Ribulose bisphosphate carboxylase large chain (475 aa).

Positions 1 to 2 are excised as a propeptide; it reads MS. Pro-3 carries the post-translational modification N-acetylproline. Lys-14 bears the N6,N6,N6-trimethyllysine mark. Residues Asn-123 and Thr-173 each coordinate substrate. Lys-175 acts as the Proton acceptor in catalysis. Lys-177 lines the substrate pocket. 3 residues coordinate Mg(2+): Lys-201, Asp-203, and Glu-204. The residue at position 201 (Lys-201) is an N6-carboxylysine. His-294 functions as the Proton acceptor in the catalytic mechanism. Residues Arg-295, His-327, and Ser-379 each contribute to the substrate site.

It belongs to the RuBisCO large chain family. Type I subfamily. Heterohexadecamer of 8 large chains and 8 small chains; disulfide-linked. The disulfide link is formed within the large subunit homodimers. The cofactor is Mg(2+). In terms of processing, the disulfide bond which can form in the large chain dimeric partners within the hexadecamer appears to be associated with oxidative stress and protein turnover.

Its subcellular location is the plastid. It localises to the chloroplast. The catalysed reaction is 2 (2R)-3-phosphoglycerate + 2 H(+) = D-ribulose 1,5-bisphosphate + CO2 + H2O. It carries out the reaction D-ribulose 1,5-bisphosphate + O2 = 2-phosphoglycolate + (2R)-3-phosphoglycerate + 2 H(+). In terms of biological role, ruBisCO catalyzes two reactions: the carboxylation of D-ribulose 1,5-bisphosphate, the primary event in carbon dioxide fixation, as well as the oxidative fragmentation of the pentose substrate in the photorespiration process. Both reactions occur simultaneously and in competition at the same active site. In Buxus microphylla (Littleleaf boxwood), this protein is Ribulose bisphosphate carboxylase large chain.